Reading from the N-terminus, the 445-residue chain is Xylose isomerase (445 aa).

Catalysis depends on residues His-107 and Asp-110. Mg(2+) contacts are provided by Glu-238, Glu-274, His-277, Asp-302, Asp-313, Asp-315, and Asp-345.

This sequence belongs to the xylose isomerase family. In terms of assembly, homotetramer. It depends on Mg(2+) as a cofactor.

Its subcellular location is the cytoplasm. The catalysed reaction is alpha-D-xylose = alpha-D-xylulofuranose. The polypeptide is Xylose isomerase (Bacillus cereus (strain ATCC 10987 / NRS 248)).